We begin with the raw amino-acid sequence, 181 residues long: Lysozyme A (181 aa).

A signal peptide spans 1 to 19; it reads MRIAFFLLVLAVIIGFAYG. Residues 139-181 constitute a propeptide that is removed on maturation; that stretch reads LTDSRPLGPFNVTESEMAQLFIDHEIAMAQCEAEKTCNGFDLE.

Belongs to the dictyostelium lysozyme family. In terms of processing, contains six disulfide bonds.

It is found in the cytoplasmic vesicle lumen. The catalysed reaction is Hydrolysis of 1,4-beta-linkages between N-acetylmuramic acid and N-acetyl-D-glucosamine residues in a peptidoglycan.. Has antibacterial activity against the Gram-positive bacteria B.subtilis, B.megaterium and M.luteus. No antibacterial activity detected against the Gram-positive bacterium S.aureus or against the Gram-negative bacterium E.coli. Lacks chitinase activity. This Dictyostelium discoideum (Social amoeba) protein is Lysozyme A.